The sequence spans 858 residues: Elongation factor 2b (858 aa).

A tr-type G domain is found at 17–362 (SNIRNMSVIA…MITIHLPSPV (346 aa)). Residues 26 to 33 (AHVDHGKS), 158 to 161 (NKMD), and 216 to 218 (SGL) each bind GTP. At histidine 715 the chain carries Diphthamide.

Belongs to the TRAFAC class translation factor GTPase superfamily. Classic translation factor GTPase family. EF-G/EF-2 subfamily. Binds to 80S ribosomes. Actively translating ribosomes show mutually exclusive binding of eIF5a (EIF5A or EIF5A2) and EEF2/eEF2. Interacts with serbp1; interaction sequesters eef2/eEF2 at the A-site of the ribosome, thereby blocking the interaction sites of the mRNA-tRNA complex, promoting ribosome stabilization and hibernation. Interacts with habp4; interaction takes place at the A-site of hibernating ribosomes and promotes ribosome stabilization.

The protein resides in the cytoplasm. It localises to the nucleus. The enzyme catalyses GTP + H2O = GDP + phosphate + H(+). In terms of biological role, catalyzes the GTP-dependent ribosomal translocation step during translation elongation. During this step, the ribosome changes from the pre-translocational (PRE) to the post-translocational (POST) state as the newly formed A-site-bound peptidyl-tRNA and P-site-bound deacylated tRNA move to the P and E sites, respectively. Catalyzes the coordinated movement of the two tRNA molecules, the mRNA and conformational changes in the ribosome. The protein is Elongation factor 2b of Danio rerio (Zebrafish).